The chain runs to 376 residues: Nuclear egress protein 1 (376 aa).

S19 is subject to Phosphoserine. Positions 22–57 are disordered; that stretch reads RKRRQRELASKVASTVNGATSANNHGEPPSPADARP. Polar residues predominate over residues 33-45; it reads VASTVNGATSANN. Residues 106 to 211 form a CCCH-type zinc finger; that stretch reads CLDISPYGNE…HVIFENPDVH (106 aa). The interval 316-376 is disordered; sequence VVSTNGCGPS…PLFLNSIRAP (61 aa). A compositionally biased stretch (polar residues) spans 317-332; that stretch reads VSTNGCGPSSSSQSTP.

This sequence belongs to the herpesviridae NEC1 protein family. In terms of assembly, forms a heterohexameric complex with NEC2. Interacts with capsid vertex specific component 2/CVC2; this interaction directs the capsid to the host inner nuclear membrane to initiate budding. Phosphorylated at serine residues in the N-terminus. This phosphorylation regulates the localization within the inner nuclear membrane. Phosphorylation by viral kinase UL97 at Ser-19 plays an important role for correct viral nuclear egress complex (NEC) localization.

The protein localises to the host nucleus inner membrane. Functionally, plays an essential role in virion nuclear egress, the first step of virion release from infected cell. Within the host nucleus, NEC1 interacts with the newly formed capsid through the vertexes and directs it to the inner nuclear membrane by associating with NEC2. Induces the budding of the capsid at the inner nuclear membrane as well as its envelopment into the perinuclear space. There, the NEC1/NEC2 complex promotes the fusion of the enveloped capsid with the outer nuclear membrane and the subsequent release of the viral capsid into the cytoplasm where it will reach the secondary budding sites in the host Golgi or trans-Golgi network. The chain is Nuclear egress protein 1 from Homo sapiens (Human).